Consider the following 159-residue polypeptide: uncharacterized protein (159 aa).

Disordered regions lie at residues 1–29 and 114–159; these read MHQT…TSES and TRGG…NENT. A compositionally biased stretch (polar residues) spans 15-29; the sequence is SFSNESPTSRETSES.

This is an uncharacterized protein from Homo sapiens (Human).